The primary structure comprises 224 residues: V-type proton ATPase subunit S1-like protein (224 aa).

The chain crosses the membrane as a helical span at residues 147–167 (PAFLIGLAMSLILLLVLAYAL).

The protein belongs to the vacuolar ATPase subunit S1 family.

It is found in the membrane. This Homo sapiens (Human) protein is V-type proton ATPase subunit S1-like protein (ATP6AP1L).